The primary structure comprises 158 residues: NAD(P)H-quinone oxidoreductase subunit J, chloroplastic (158 aa).

Belongs to the complex I 30 kDa subunit family. NDH is composed of at least 16 different subunits, 5 of which are encoded in the nucleus.

The protein localises to the plastid. Its subcellular location is the chloroplast thylakoid membrane. The catalysed reaction is a plastoquinone + NADH + (n+1) H(+)(in) = a plastoquinol + NAD(+) + n H(+)(out). It carries out the reaction a plastoquinone + NADPH + (n+1) H(+)(in) = a plastoquinol + NADP(+) + n H(+)(out). In terms of biological role, NDH shuttles electrons from NAD(P)H:plastoquinone, via FMN and iron-sulfur (Fe-S) centers, to quinones in the photosynthetic chain and possibly in a chloroplast respiratory chain. The immediate electron acceptor for the enzyme in this species is believed to be plastoquinone. Couples the redox reaction to proton translocation, and thus conserves the redox energy in a proton gradient. This chain is NAD(P)H-quinone oxidoreductase subunit J, chloroplastic, found in Crucihimalaya wallichii (Rock-cress).